A 444-amino-acid polypeptide reads, in one-letter code: Probable D-serine dehydratase (444 aa).

Residue lysine 118 is modified to N6-(pyridoxal phosphate)lysine.

It belongs to the serine/threonine dehydratase family. DsdA subfamily. Pyridoxal 5'-phosphate serves as cofactor.

The catalysed reaction is D-serine = pyruvate + NH4(+). This is Probable D-serine dehydratase from Acinetobacter baumannii (strain ATCC 17978 / DSM 105126 / CIP 53.77 / LMG 1025 / NCDC KC755 / 5377).